A 388-amino-acid polypeptide reads, in one-letter code: S-adenosylmethionine synthase (388 aa).

ATP is bound at residue histidine 16. Aspartate 18 contributes to the Mg(2+) binding site. Glutamate 44 lines the K(+) pocket. The L-methionine site is built by glutamate 57 and glutamine 100. A flexible loop region spans residues 100-110 (QSPEIAQGVDR). ATP-binding positions include 165–167 (DAK), 231–232 (KF), aspartate 240, 246–247 (RK), alanine 263, and lysine 267. Aspartate 240 is a binding site for L-methionine. An L-methionine-binding site is contributed by lysine 271.

It belongs to the AdoMet synthase family. In terms of assembly, homotetramer; dimer of dimers. It depends on Mg(2+) as a cofactor. Requires K(+) as cofactor.

The protein localises to the cytoplasm. It carries out the reaction L-methionine + ATP + H2O = S-adenosyl-L-methionine + phosphate + diphosphate. Its pathway is amino-acid biosynthesis; S-adenosyl-L-methionine biosynthesis; S-adenosyl-L-methionine from L-methionine: step 1/1. Catalyzes the formation of S-adenosylmethionine (AdoMet) from methionine and ATP. The overall synthetic reaction is composed of two sequential steps, AdoMet formation and the subsequent tripolyphosphate hydrolysis which occurs prior to release of AdoMet from the enzyme. The chain is S-adenosylmethionine synthase from Psychrobacter arcticus (strain DSM 17307 / VKM B-2377 / 273-4).